We begin with the raw amino-acid sequence, 253 residues long: 5-oxoprolinase subunit A (253 aa).

This sequence belongs to the LamB/PxpA family. In terms of assembly, forms a complex composed of PxpA, PxpB and PxpC.

The catalysed reaction is 5-oxo-L-proline + ATP + 2 H2O = L-glutamate + ADP + phosphate + H(+). Catalyzes the cleavage of 5-oxoproline to form L-glutamate coupled to the hydrolysis of ATP to ADP and inorganic phosphate. In Bacillus cereus (strain ZK / E33L), this protein is 5-oxoprolinase subunit A.